A 273-amino-acid polypeptide reads, in one-letter code: Large ribosomal subunit protein uL2c (273 aa).

A disordered region spans residues 223-273; sequence MNPVDHPHGGGEGRAPIGRKKPTTPWGYPALGRRSRKRNKYSDSFILRRRK.

It belongs to the universal ribosomal protein uL2 family. Part of the 50S ribosomal subunit.

Its subcellular location is the plastid. It localises to the chloroplast. This is Large ribosomal subunit protein uL2c (rpl2) from Calycanthus floridus var. glaucus (Eastern sweetshrub).